The primary structure comprises 115 residues: Small nuclear ribonucleoprotein Sm D2 (115 aa).

Residues 30–115 (LSVLQQAVKN…VVLVVRIPSA (86 aa)) form the Sm domain.

The protein belongs to the snRNP core protein family. Belongs to the 40S cdc5-associated complex (or cwf complex), a spliceosome sub-complex reminiscent of a late-stage spliceosome composed of the U2, U5 and U6 snRNAs and at least brr2, cdc5, cwf2/prp3, cwf3/syf1, cwf4/syf3, cwf5/ecm2, spp42/cwf6, cwf7/spf27, cwf8, cwf9, cwf10, cwf11, cwf12, prp45/cwf13, cwf14, cwf15, cwf16, cwf17, cwf18, cwf19, cwf20, cwf21, cwf22, cwf23, cwf24, cwf25, cwf26, cyp7/cwf27, cwf28, cwf29/ist3, lea1, msl1, prp5/cwf1, prp10, prp12/sap130, prp17, prp22, sap61, sap62, sap114, sap145, slu7, smb1, smd1, smd3, smf1, smg1 and syf2.

It localises to the nucleus. It is found in the cytoplasm. The protein resides in the cytosol. Functionally, plays a role in pre-mRNA splicing as a core component of the spliceosomal U1, U2, U4 and U5 small nuclear ribonucleoproteins (snRNPs), the building blocks of the spliceosome. The protein is Small nuclear ribonucleoprotein Sm D2 (smd2) of Schizosaccharomyces pombe (strain 972 / ATCC 24843) (Fission yeast).